A 114-amino-acid chain; its full sequence is Large ribosomal subunit protein uL18 (114 aa).

The protein belongs to the universal ribosomal protein uL18 family. As to quaternary structure, part of the 50S ribosomal subunit; part of the 5S rRNA/L5/L18/L25 subcomplex. Contacts the 5S and 23S rRNAs.

Functionally, this is one of the proteins that bind and probably mediate the attachment of the 5S RNA into the large ribosomal subunit, where it forms part of the central protuberance. The protein is Large ribosomal subunit protein uL18 of Parabacteroides distasonis (strain ATCC 8503 / DSM 20701 / CIP 104284 / JCM 5825 / NCTC 11152).